A 250-amino-acid chain; its full sequence is Small ribosomal subunit protein uS2 (250 aa).

The protein belongs to the universal ribosomal protein uS2 family.

The polypeptide is Small ribosomal subunit protein uS2 (Marinobacter nauticus (strain ATCC 700491 / DSM 11845 / VT8) (Marinobacter aquaeolei)).